The primary structure comprises 217 residues: tRNA (guanine-N(7)-)-methyltransferase (217 aa).

The S-adenosyl-L-methionine site is built by E43, D68, N101, and N123. Substrate is bound at residue K127. An interaction with RNA region spans residues 129-134; sequence RHNKRR. Residues D159 and 196–199 contribute to the substrate site; that span reads TEYE.

This sequence belongs to the class I-like SAM-binding methyltransferase superfamily. TrmB family.

The catalysed reaction is guanosine(46) in tRNA + S-adenosyl-L-methionine = N(7)-methylguanosine(46) in tRNA + S-adenosyl-L-homocysteine. Its pathway is tRNA modification; N(7)-methylguanine-tRNA biosynthesis. Functionally, catalyzes the formation of N(7)-methylguanine at position 46 (m7G46) in tRNA. This Clostridium botulinum (strain Langeland / NCTC 10281 / Type F) protein is tRNA (guanine-N(7)-)-methyltransferase.